The primary structure comprises 146 residues: Hemoglobin subunit beta (146 aa).

Val-1 is subject to N-acetylvaline. In terms of domain architecture, Globin spans 2 to 146 (HLSGEEKAAV…VANALAHKYH (145 aa)). Thr-12 is modified (phosphothreonine). Ser-44 carries the post-translational modification Phosphoserine. Lys-59 carries the N6-acetyllysine modification. His-63 contacts heme b. Lys-82 is modified (N6-acetyllysine). Heme b is bound at residue His-92. Cys-93 bears the S-nitrosocysteine mark. N6-acetyllysine is present on Lys-144.

Belongs to the globin family. As to quaternary structure, heterotetramer of two alpha chains and two beta chains. Red blood cells.

Functionally, involved in oxygen transport from the lung to the various peripheral tissues. The protein is Hemoglobin subunit beta (HBB) of Pteropus alecto (Black flying fox).